The following is a 253-amino-acid chain: Toxin PezT (253 aa).

39-46 lines the ATP pocket; the sequence is GQSGAGKT. The Proton acceptor role is filled by aspartate 66.

This sequence belongs to the zeta toxin family. As to quaternary structure, forms a PezA(2)PezT(2) heterotetramer. The heterotetramer is much more stable than either of the proteins alone, and a specific mechanism may be necessary to liberate the toxin.

It catalyses the reaction UDP-N-acetyl-alpha-D-glucosamine + ATP = UDP-N-acetyl-alpha-D-glucosamine 3'-phosphate + ADP + H(+). Its function is as follows. Toxic component of a type II toxin-antitoxin (TA) system. Phosphorylates UDP-N-acetyl-D-glucosamine (UNAG) on the 3'-hydroxyl group of the N-acetyl-D-glucosamine moiety, yielding UNAG-3P. UNAG-3P inhibits MurA, the first committed step in cell wall synthesis, which is then blocked. Upon expression in E.coli results in decreased cell growth and viability, followed 3 hours later by growth restoration; the toxic effect and phosphorylation of UNAG are neutralized by coexpression with cognate antitoxin PezA. A mutant lacking the last 11 residues is stably maintained in E.coli, unlike the wild-type which undergoes spontaneous mutation. Expression of the deletion mutant in rapidly growing liquid cultures leads to cell bulging, permeabilization and massive lysis by 1 hour. Cells that survive are not able to undergo cytokinesis. Expression in slowly growing cells leads to bulging but not lysis. Functionally, acts as a corepressor of its own operon with PezA; it is not clear if it binds DNA alone. The polypeptide is Toxin PezT (pezT) (Streptococcus pneumoniae serotype 4 (strain ATCC BAA-334 / TIGR4)).